A 266-amino-acid polypeptide reads, in one-letter code: Hydroxyethylthiazole kinase (266 aa).

Position 45 (Met-45) interacts with substrate. Lys-121 and Ser-167 together coordinate ATP. Gly-194 serves as a coordination point for substrate.

The protein belongs to the Thz kinase family. The cofactor is Mg(2+).

The enzyme catalyses 5-(2-hydroxyethyl)-4-methylthiazole + ATP = 4-methyl-5-(2-phosphooxyethyl)-thiazole + ADP + H(+). Its pathway is cofactor biosynthesis; thiamine diphosphate biosynthesis; 4-methyl-5-(2-phosphoethyl)-thiazole from 5-(2-hydroxyethyl)-4-methylthiazole: step 1/1. Catalyzes the phosphorylation of the hydroxyl group of 4-methyl-5-beta-hydroxyethylthiazole (THZ). This chain is Hydroxyethylthiazole kinase, found in Methanocella arvoryzae (strain DSM 22066 / NBRC 105507 / MRE50).